Consider the following 1268-residue polypeptide: Vigilin (1268 aa).

S2 is subject to N-acetylserine. A Phosphothreonine modification is found at T8. S11 and S31 each carry phosphoserine. KH domains are found at residues 150 to 212, 222 to 284, 295 to 357, 364 to 424, 435 to 497, 507 to 570, and 581 to 643; these read QASA…RHEV, RAVE…VARI, TTTI…LTEV, FTVS…QEQI, MDYV…KREL, ERTK…TKYM, and SYSI…RSRI. Residues T295 and T296 each carry the phosphothreonine modification. S317 carries the phosphoserine modification. Y437 is subject to Phosphotyrosine. S645 bears the Phosphoserine mark. KH domains lie at 653-716, 727-790, 800-863, 873-967, 972-1034, 1052-1117, and 1127-1190; these read IAEV…KKQL, SFTV…QKEL, VVED…KKRI, QVTV…KEAL, PVTI…KAGL, SFKL…RDAI, and MVSE…IDHI. A disordered region spans residues 910 to 947; it reads PDREENPVHSVEPSIQENGDEAGEGREAKETDPGSPRR. Over residues 932–947 the composition is skewed to basic and acidic residues; it reads GEGREAKETDPGSPRR. N6-acetyllysine is present on K991. A disordered region spans residues 1213 to 1268; the sequence is PPAHEESRAPSKGFVVRDAPWTSNSSEKAPDMSSSEEFPSFGAQVAPKTLPWGPKR. Residues 1233–1249 are compositionally biased toward polar residues; that stretch reads WTSNSSEKAPDMSSSEE. Phosphoserine occurs at positions 1247 and 1252.

It is found in the cytoplasm. Its subcellular location is the nucleus. Its function is as follows. Appears to play a role in cell sterol metabolism. It may function to protect cells from over-accumulation of cholesterol. The sequence is that of Vigilin (Hdlbp) from Mus musculus (Mouse).